The chain runs to 402 residues: MHRKVILLLTVSLLLRIGFFSYGIFQDSHFDVKYTDIDYFVFHDAAGYVNNGQSPYLRDTYRYTPLLSFLLLPNYYLKWIHMGKVFFVLFDLITGVMIIKLLQGSCQLTKQLILASIWLLNPIVITISTRGNAESVLCFLIICALYFLKRDRLLISGLFYGLSIHFKIYPIIYALPIGIYLLLSSHNRNCIWRLFMIGISTLIGITAPTYFMYKLYGSEFIEHSYMYHLTRTDHRHNFSIWNLVLLLESAGIHLSQSIELSKLAFVPQLTLCAVLPYLLWKSQTFENLMNVLFVQTYAFVTFNKVCTSQYFIWYLVLSPFYFANTTITWRKGVVCIFLWILSQAVWLSQAYLLEFKGQNVFFPNLFFGNIVFFLINVYLLGVFITDIKSRTSFQDNQHKKNI.

10 helical membrane passes run 5 to 25 (VILL…YGIF), 79 to 99 (WIHM…VMII), 108 to 128 (LTKQ…ITIS), 162 to 182 (LSIH…IYLL), 191 to 211 (IWRL…PTYF), 238 to 258 (FSIW…SQSI), 260 to 280 (LSKL…YLLW), 309 to 329 (QYFI…TITW), 333 to 353 (VVCI…AYLL), and 365 to 385 (LFFG…VFIT).

This sequence belongs to the PIGM family.

Its subcellular location is the endoplasmic reticulum membrane. Its pathway is glycolipid biosynthesis; glycosylphosphatidylinositol-anchor biosynthesis. Its function is as follows. Mannosyltransferase involved in glycosylphosphatidylinositol-anchor biosynthesis. Transfers the first alpha-1,4-mannose to GlcN-acyl-PI during GPI precursor assembly. Required for cell wall integrity. The protein is GPI mannosyltransferase 1 (GPI14) of Kluyveromyces lactis (strain ATCC 8585 / CBS 2359 / DSM 70799 / NBRC 1267 / NRRL Y-1140 / WM37) (Yeast).